The primary structure comprises 132 residues: Small ribosomal subunit protein uS8 (132 aa).

The protein belongs to the universal ribosomal protein uS8 family. As to quaternary structure, part of the 30S ribosomal subunit. Contacts proteins S5 and S12.

Functionally, one of the primary rRNA binding proteins, it binds directly to 16S rRNA central domain where it helps coordinate assembly of the platform of the 30S subunit. The polypeptide is Small ribosomal subunit protein uS8 (Limosilactobacillus reuteri (strain DSM 20016) (Lactobacillus reuteri)).